The following is a 159-amino-acid chain: MSGLTHFDESGSAHMVDVSEKPVTARVAVARGAVKMSAETLALVTEGRAEKGDVLGVARLAGIMGAKRTADLIPLCHPLPITKVALELTADPALPGVVVEATVKTGGQTGVEMEALTAVSVACLTIYDMVKAVEKGMEITGIRLLLKEGGKSGRFEASA.

Substrate-binding positions include 75-77 (LCH) and 113-114 (ME). The active site involves D128.

It belongs to the MoaC family. In terms of assembly, homohexamer; trimer of dimers.

The enzyme catalyses (8S)-3',8-cyclo-7,8-dihydroguanosine 5'-triphosphate = cyclic pyranopterin phosphate + diphosphate. The protein operates within cofactor biosynthesis; molybdopterin biosynthesis. In terms of biological role, catalyzes the conversion of (8S)-3',8-cyclo-7,8-dihydroguanosine 5'-triphosphate to cyclic pyranopterin monophosphate (cPMP). The protein is Cyclic pyranopterin monophosphate synthase of Cereibacter sphaeroides (strain ATCC 17029 / ATH 2.4.9) (Rhodobacter sphaeroides).